The primary structure comprises 551 residues: Tetrachloroethene reductive dehalogenase (551 aa).

The segment at residues 1-39 is a signal peptide (tat-type signal); that stretch reads MGEINRRNFLKASMLGAAAAAVASASAVKGMVSPLVADA. A 4Fe-4S ferredoxin-type 1 domain is found at 411 to 440; that stretch reads PRKFGVREFCRLCKKCADACPAQAISHEKD. Positions 420, 423, 426, 430, 467, 478, 481, and 485 each coordinate [4Fe-4S] cluster. In terms of domain architecture, 4Fe-4S ferredoxin-type 2 spans 478–496; the sequence is CANCVAVCSWNKVETWNHD.

This sequence belongs to the PceA family. Monomer. [4Fe-4S] cluster serves as cofactor. Corrinoid is required as a cofactor. In terms of processing, predicted to be exported by the Tat system. The position of the signal peptide cleavage has been experimentally proven.

It localises to the cell membrane. The enzyme catalyses trichloroethene + chloride + A + H(+) = tetrachloroethene + AH2. The catalysed reaction is trichloroethene + AH2 = (Z)-1,2-dichloroethene + chloride + A + H(+). Its activity is regulated as follows. Activity is inhibited by ammonium ions. Photoreversibly inactivated by 1-iodopropane. Its function is as follows. Catalyzes the reductive dechlorination of tetrachloroethene (PCE) to trichloroethene (TCE) and of trichloroethene to cis-1,2-dichloroethene (DCE). Can also use trichlorofluoroethene, tetrachloromethane, hexachloroethane, tetrachloroethane, trichloroethane and 1,1,1-trichloro-2,2,2-trifluoroethane. Menaquinone can act as the electron donor. Reduced methyl viologen can act as the artificial electron donor. The polypeptide is Tetrachloroethene reductive dehalogenase (Dehalobacter restrictus (strain DSM 9455 / PER-K23)).